The following is a 948-amino-acid chain: Insulin receptor substrate 1 (948 aa).

Positions 8–109 (GMALSGYLKK…WLDKLLVLQR (102 aa)) constitute a PH domain. The 115-residue stretch at 122–236 (YDQVWQVVIQ…SAMSAKTESN (115 aa)) folds into the IRS-type PTB domain. Residues 247 to 270 (PDLSHEPMRKRSSSANEASKPINV) form a disordered region. A phosphoserine mark is found at serine 286 and serine 287. Residues 304–329 (RNGTLSESSNQTYFGSNHGLRSNTIS) show a composition bias toward polar residues. Residues 304–373 (RNGTLSESSN…SDDNGSFSHY (70 aa)) are disordered. Serine 342 is subject to Phosphoserine. Position 410 is a phosphotyrosine; by INSR (tyrosine 410). The YXXM motif 1 motif lies at 410 to 413 (YIPM). A disordered region spans residues 528–559 (ANRSQSSITKEGTSYSTSSNRQKKSTSAPLLS). Residues 529-556 (NRSQSSITKEGTSYSTSSNRQKKSTSAP) are compositionally biased toward polar residues. Residue serine 554 is modified to Phosphoserine. The YXXM motif 2 motif lies at 640-643 (YLEM). The tract at residues 703–734 (EKKSNSPLNETPCSLKPTDVESNSHDEHSTNN) is disordered. Positions 720-731 (TDVESNSHDEHS) are enriched in basic and acidic residues. Tyrosine 891 carries the post-translational modification Phosphotyrosine; by INSR. A disordered region spans residues 907–948 (YLKRGSRESPPVSACPGDGNTYAKIDFDQSDSSSSSSNIFNT). Residues serine 912 and serine 915 each carry the phosphoserine modification. Tyrosine 928 is subject to Phosphotyrosine; by INSR. Positions 936 to 948 (SDSSSSSSNIFNT) are enriched in low complexity.

Bindings to phosphatidylinositol 3-kinase and SHP2.

Functionally, activates phosphatidylinositol 3-kinase when bound to the regulatory p85 subunit. May mediate the control of various cellular processes by insulin-like peptides. When phosphorylated by the insulin receptor binds specifically to various cellular proteins containing SH2 domains. Involved in control of cell proliferation, cell size, and body and organ growth throughout development. Also has a role in a signaling pathway controlling the physiological response required to endure periods of low nutrient conditions. Insulin/insulin-like growth factor (IGF) signaling pathway has a role in regulating aging and is necessary in the ovary for vitellogenic maturation. This Drosophila erecta (Fruit fly) protein is Insulin receptor substrate 1.